Here is a 115-residue protein sequence, read N- to C-terminus: T cell receptor beta variable 11-1 (115 aa).

Positions 1 to 21 are cleaved as a signal peptide; it reads MSTRLLCWMALCLLGAELSEA. Positions 22-115 constitute an Ig-like domain; that stretch reads EVAQSPRYKI…SAMYLCASSL (94 aa). Cysteines 42 and 111 form a disulfide.

In terms of assembly, alpha-beta TR is a heterodimer composed of an alpha and beta chain; disulfide-linked. The alpha-beta TR is associated with the transmembrane signaling CD3 coreceptor proteins to form the TR-CD3 (TcR or TCR). The assembly of alpha-beta TR heterodimers with CD3 occurs in the endoplasmic reticulum where a single alpha-beta TR heterodimer associates with one CD3D-CD3E heterodimer, one CD3G-CD3E heterodimer and one CD247 homodimer forming a stable octameric structure. CD3D-CD3E and CD3G-CD3E heterodimers preferentially associate with TR alpha and TR beta chains, respectively. The association of the CD247 homodimer is the last step of TcR assembly in the endoplasmic reticulum and is required for transport to the cell surface.

The protein resides in the cell membrane. V region of the variable domain of T cell receptor (TR) beta chain that participates in the antigen recognition. Alpha-beta T cell receptors are antigen specific receptors which are essential to the immune response and are present on the cell surface of T lymphocytes. Recognize peptide-major histocompatibility (MH) (pMH) complexes that are displayed by antigen presenting cells (APC), a prerequisite for efficient T cell adaptive immunity against pathogens. Binding of alpha-beta TR to pMH complex initiates TR-CD3 clustering on the cell surface and intracellular activation of LCK that phosphorylates the ITAM motifs of CD3G, CD3D, CD3E and CD247 enabling the recruitment of ZAP70. In turn ZAP70 phosphorylates LAT, which recruits numerous signaling molecules to form the LAT signalosome. The LAT signalosome propagates signal branching to three major signaling pathways, the calcium, the mitogen-activated protein kinase (MAPK) kinase and the nuclear factor NF-kappa-B (NF-kB) pathways, leading to the mobilization of transcription factors that are critical for gene expression and essential for T cell growth and differentiation. The T cell repertoire is generated in the thymus, by V-(D)-J rearrangement. This repertoire is then shaped by intrathymic selection events to generate a peripheral T cell pool of self-MH restricted, non-autoaggressive T cells. Post-thymic interaction of alpha-beta TR with the pMH complexes shapes TR structural and functional avidity. The polypeptide is T cell receptor beta variable 11-1 (Homo sapiens (Human)).